Reading from the N-terminus, the 180-residue chain is GTP cyclohydrolase 1 (180 aa).

Zn(2+) contacts are provided by C71, H74, and C142.

This sequence belongs to the GTP cyclohydrolase I family. Toroid-shaped homodecamer, composed of two pentamers of five dimers.

It carries out the reaction GTP + H2O = 7,8-dihydroneopterin 3'-triphosphate + formate + H(+). It participates in cofactor biosynthesis; 7,8-dihydroneopterin triphosphate biosynthesis; 7,8-dihydroneopterin triphosphate from GTP: step 1/1. This chain is GTP cyclohydrolase 1 (folE), found in Helicobacter pylori (strain ATCC 700392 / 26695) (Campylobacter pylori).